The chain runs to 489 residues: MSFNINWDSIQKESLSAWTAELLNDALNSGKRPNVLCTDIQIEDLSFGTIPPDFEILEIGDLSSDSFRGIFKFNYDGDASITLRTKVQANPLKIYEDNLLDQFEDDQRELGEFIKPRFVMATDILEIPLNLKLSQIKLSSIIIIVFSRSKGLTLVFKNDPLESISVSSTFDRIKPLARFLQNKIETQISELFKEFLPSVLYKFSQKYTTENFADFHRELLHTQHPERNTENRVTLQDIDPEAPLIISPGSLMRLTTLSSSRQTLTLGGKISADKLNPDIITKNYFNELIPKTYNKFQLKADKVADIAQNIHSIKNLQSRIFWKNSKNNDKPHRRVVCLGDKDKSKEKCKQVESESLYRRSVYSQGSIFNDGASDVSTLTESTEVEQEAPNTEFPKLQAVDLKPDMSVETIIQNSSQEKHRKVKPIDDIGLIGRRKERLRELLKYDVVDFSMPPMPGSPTKFFNTNIFHDSNHINNGNLPIRVAPPPYQC.

Residues 1-205 (MSFNINWDSI…LPSVLYKFSQ (205 aa)) form the SMP-LTD domain.

This sequence belongs to the MDM34 family. In terms of assembly, component of the ER-mitochondria encounter structure (ERMES) or MDM complex, composed of MMM1, MDM10, MDM12 and MDM34.

The protein localises to the mitochondrion outer membrane. In terms of biological role, component of the ERMES/MDM complex, which serves as a molecular tether to connect the endoplasmic reticulum (ER) and mitochondria. Components of this complex are involved in the control of mitochondrial shape and protein biogenesis, and function in nonvesicular lipid trafficking between the ER and mitochondria. MDM34 is required for the interaction of the ER-resident membrane protein MMM1 and the outer mitochondrial membrane-resident beta-barrel protein MDM10. The chain is Mitochondrial distribution and morphology protein 34 from Komagataella phaffii (strain GS115 / ATCC 20864) (Yeast).